The primary structure comprises 329 residues: Strigolactones hydrolase CXE15 (329 aa).

An Involved in the stabilization of the negatively charged intermediate by the formation of the oxyanion hole motif is present at residues 83–85; that stretch reads HGG. The (-)-2'-epi-GR24 site is built by Gly-85, Gly-86, Ser-169, and Ser-170. Ser-169 acts as the Nucleophile in catalysis. Catalysis depends on residues Glu-271 and His-302.

The protein belongs to the 'GDXG' lipolytic enzyme family. Expressed in axillary buds, leaves, stems, hypocotyls, flowers, siliques, and vasculatures of shoots and roots.

It localises to the nucleus. The protein resides in the cytoplasm. It is found in the cytosol. The catalysed reaction is (-)-2'-epi-GR24 + H2O = (-)-2'-epi-GR24 ABC-rings + 5-hydroxy-3-methylfuran-2(5H)-one. The enzyme catalyses 5-deoxystrigol + H2O = 5-deoxystrigol ABC-rings + 5-hydroxy-3-methylfuran-2(5H)-one. It catalyses the reaction orobanchol + H2O = orobanchol ABC-rings + 5-hydroxy-3-methylfuran-2(5H)-one. Functionally, binds to strigolactones (SLs) such as (-)-2'-epi-GR24(4DO), 5-deoxystrigol (5DS) and orobanchol, and catalyzes their hydrolysis; SL are phytohormones controlling shoot branching and communications between plants and microorganisms. Promotes shoot branching by dampening SL-inhibited axillary bud outgrowth. The chain is Strigolactones hydrolase CXE15 from Arabidopsis thaliana (Mouse-ear cress).